A 566-amino-acid chain; its full sequence is Serine/threonine-protein kinase PknE (566 aa).

At 1–337 (MDGTAESREG…PLPRSARQPW (337 aa)) the chain is on the cytoplasmic side. The residue at position 7 (Ser-7) is a Phosphoserine; by autocatalysis. Thr-11 is subject to Phosphothreonine; by autocatalysis. The 260-residue stretch at 16 to 275 (YRLRRLVGRG…DLSAAAHAAL (260 aa)) folds into the Protein kinase domain. Residues 22 to 30 (VGRGGMGDV) and Lys-45 contribute to the ATP site. A phosphothreonine; by autocatalysis mark is found at Thr-50 and Thr-59. Asp-139 functions as the Proton acceptor in the catalytic mechanism. Phosphothreonine; by autocatalysis is present on residues Thr-170, Thr-175, and Thr-178. The segment at 296 to 330 (PVPSTHPVSPGTRWPQPTPWAGGAPPWGPPSSPLP) is disordered. Residues 338 to 358 (LWVGVAVAVVVALAGGLGIAL) form a helical membrane-spanning segment. At 359 to 566 (AHPWRSSGPR…DPSWLARLIG (208 aa)) the chain is on the extracellular side.

This sequence belongs to the protein kinase superfamily. Ser/Thr protein kinase family. In terms of processing, autophosphorylated on serine and threonine residues. Dephosphorylated by PstP.

The protein resides in the cell membrane. It catalyses the reaction L-seryl-[protein] + ATP = O-phospho-L-seryl-[protein] + ADP + H(+). It carries out the reaction L-threonyl-[protein] + ATP = O-phospho-L-threonyl-[protein] + ADP + H(+). The sequence is that of Serine/threonine-protein kinase PknE (pknE) from Mycobacterium bovis (strain ATCC BAA-935 / AF2122/97).